A 430-amino-acid chain; its full sequence is Pre-mRNA-processing protein 45 (430 aa).

Residues 1-26 (MSFRTLSSLLPSPQNSEVSESSAFSR) show a composition bias toward polar residues. Disordered regions lie at residues 1–28 (MSFR…SRQS), 280–299 (MERN…NKMS), and 370–430 (PTTG…PHTS).

Belongs to the SNW family. As to quaternary structure, associated with the spliceosome.

It is found in the nucleus. Involved in pre-mRNA splicing. This chain is Pre-mRNA-processing protein 45 (PRP45), found in Kluyveromyces lactis (strain ATCC 8585 / CBS 2359 / DSM 70799 / NBRC 1267 / NRRL Y-1140 / WM37) (Yeast).